The primary structure comprises 197 residues: Pyridoxal 5'-phosphate synthase subunit PdxT (197 aa).

53-55 (GES) provides a ligand contact to L-glutamine. Cysteine 85 (nucleophile) is an active-site residue. L-glutamine-binding positions include arginine 114 and 142-143 (IR). Catalysis depends on charge relay system residues histidine 179 and glutamate 181.

The protein belongs to the glutaminase PdxT/SNO family. As to quaternary structure, in the presence of PdxS, forms a dodecamer of heterodimers. Only shows activity in the heterodimer.

It catalyses the reaction aldehydo-D-ribose 5-phosphate + D-glyceraldehyde 3-phosphate + L-glutamine = pyridoxal 5'-phosphate + L-glutamate + phosphate + 3 H2O + H(+). The catalysed reaction is L-glutamine + H2O = L-glutamate + NH4(+). Its pathway is cofactor biosynthesis; pyridoxal 5'-phosphate biosynthesis. Catalyzes the hydrolysis of glutamine to glutamate and ammonia as part of the biosynthesis of pyridoxal 5'-phosphate. The resulting ammonia molecule is channeled to the active site of PdxS. This Thermococcus gammatolerans (strain DSM 15229 / JCM 11827 / EJ3) protein is Pyridoxal 5'-phosphate synthase subunit PdxT.